We begin with the raw amino-acid sequence, 182 residues long: ATP-dependent protease subunit HslV (182 aa).

T10 is an active-site residue. The Na(+) site is built by A166, C169, and S172.

Belongs to the peptidase T1B family. HslV subfamily. A double ring-shaped homohexamer of HslV is capped on each side by a ring-shaped HslU homohexamer. The assembly of the HslU/HslV complex is dependent on binding of ATP.

Its subcellular location is the cytoplasm. The enzyme catalyses ATP-dependent cleavage of peptide bonds with broad specificity.. Its activity is regulated as follows. Allosterically activated by HslU binding. In terms of biological role, protease subunit of a proteasome-like degradation complex believed to be a general protein degrading machinery. This Rickettsia africae (strain ESF-5) protein is ATP-dependent protease subunit HslV.